A 569-amino-acid polypeptide reads, in one-letter code: ATP-dependent RNA helicase dhh1 (569 aa).

Polar residues predominate over residues 1–16 (MSDQLADQLKATSLSS). The tract at residues 1–39 (MSDQLADQLKATSLSSGPEDWKKGLNLPARDTRQQTEDV) is disordered. Residues 45 to 73 (LDWEDFIHDRDLLMGIFEAGFEKPSPIQE) carry the Q motif motif. The Helicase ATP-binding domain occupies 76 to 246 (IPVALTGRDI…DKNMTSPYEI (171 aa)). 89 to 96 (AKNGTGKT) contributes to the ATP binding site. A DEAD box motif is present at residues 194–197 (DEAD). The 161-residue stretch at 256 to 416 (GITQYYAFVE…PIPQTIDKSL (161 aa)) folds into the Helicase C-terminal domain. Residues 436-569 (AQQPQQQLQQ…GQPQGPLSAQ (134 aa)) form a disordered region. The segment covering 437–482 (QQPQQQLQQSQRPQQSQQQQHFSTQTQPSNQLPPQQGNQQLGFNPQ) has biased composition (low complexity). The segment covering 495–520 (GDWQGQNGRQNGTGASNNQPRPTNYQ) has biased composition (polar residues). Gly residues predominate over residues 529 to 542 (SRGGRGRGFQGQGG). The span at 543–569 (RQNQNYGGQRGPRTQGQGQPQGPLSAQ) shows a compositional bias: low complexity.

This sequence belongs to the DEAD box helicase family. DDX6/DHH1 subfamily.

The protein localises to the cytoplasm. It localises to the P-body. The enzyme catalyses ATP + H2O = ADP + phosphate + H(+). In terms of biological role, ATP-dependent RNA helicase involved in mRNA turnover, and more specifically in mRNA decapping. Is involved in G1/S DNA-damage checkpoint recovery, probably through the regulation of the translational status of a subset of mRNAs. May also have a role in translation and mRNA nuclear export. This chain is ATP-dependent RNA helicase dhh1 (drh-10), found in Neurospora crassa (strain ATCC 24698 / 74-OR23-1A / CBS 708.71 / DSM 1257 / FGSC 987).